The sequence spans 269 residues: Surfeit locus protein 4 (269 aa).

Helical transmembrane passes span 64-84 (FLAT…CVLV), 92-112 (YACF…SILW), 179-199 (FFSI…AVGF), 203-223 (LAAL…NAFW), and 242-262 (TTSV…GVSM). The short motif at 266–269 (KKEW) is the Di-lysine motif element.

The protein belongs to the SURF4 family.

It is found in the endoplasmic reticulum membrane. Its subcellular location is the endoplasmic reticulum-Golgi intermediate compartment membrane. The protein resides in the golgi apparatus membrane. In terms of biological role, endoplasmic reticulum cargo receptor that mediates the export of lipoproteins by recruiting cargos into COPII vesicles to facilitate their secretion. This chain is Surfeit locus protein 4, found in Danio rerio (Zebrafish).